The chain runs to 180 residues: ADP-ribosylation factor-like protein 1 (180 aa).

G2 carries the N-myristoyl glycine lipid modification. Residues 23–30 (GLDGAGKT), 66–70 (DLGGQ), and 125–128 (NKQD) contribute to the GTP site.

It belongs to the small GTPase superfamily. Arf family. As to expression, expressed in neuronal cells. Expression in hypodermal tissues is absent.

The protein resides in the golgi apparatus. It localises to the cytoplasm. Its subcellular location is the cytoplasmic granule. Its function is as follows. GTP-binding protein that may be involved in protein trafficking; may modulate vesicle budding and uncoating within the Golgi apparatus. Plays a role in male tail tip morphogenesis. The chain is ADP-ribosylation factor-like protein 1 from Caenorhabditis elegans.